The sequence spans 66 residues: Phylloseptin-S1 (66 aa).

An N-terminal signal peptide occupies residues 1-22; the sequence is MAFLKKSLFLVLFLGLVSLSIC. The propeptide occupies 23–46; it reads EEEKRETEEEEHDQEEDDKSEEKR. Residues 25–44 are disordered; the sequence is EKRETEEEEHDQEEDDKSEE. Positions 30–41 are enriched in acidic residues; that stretch reads EEEEHDQEEDDK. Phenylalanine 65 carries the phenylalanine amide modification.

Expressed by the skin glands.

It localises to the secreted. The protein resides in the target cell membrane. Antimicrobial peptide with high activity against Gram-positive bacteria, low activity against Gram-negative bacteria, and moderate activity against fungi. Acts on bacterial biofilms (S.aureus) with the same potency than on bacteria. Acts by causing bacterial membrane disruption inducing leakage of the intracellular content followed by cell death. It adopts an alpha-helical amphipathic structure in membrane environments. Also shows highly potent antiparasitic activity against Leishmania species. Shows low hemolytic activity on horse and human erythrocytes (LC(50)=39 uM). Is also active on human monocytes (IC(50)=23 uM). This chain is Phylloseptin-S1, found in Phyllomedusa sauvagei (Sauvage's leaf frog).